The following is a 234-amino-acid chain: Peptidase E (234 aa).

Catalysis depends on charge relay system residues Ser123, Asp138, and His160.

It belongs to the peptidase S51 family.

The protein resides in the cytoplasm. The catalysed reaction is Dipeptidase E catalyzes the hydrolysis of dipeptides Asp-|-Xaa. It does not act on peptides with N-terminal Glu, Asn or Gln, nor does it cleave isoaspartyl peptides.. In terms of biological role, hydrolyzes dipeptides containing N-terminal aspartate residues. May play a role in allowing the cell to use peptide aspartate to spare carbon otherwise required for the synthesis of the aspartate family of amino acids. The chain is Peptidase E from Actinobacillus pleuropneumoniae serotype 5b (strain L20).